The primary structure comprises 260 residues: DNA repair protein RecO (260 aa).

The protein belongs to the RecO family.

Functionally, involved in DNA repair and RecF pathway recombination. The protein is DNA repair protein RecO of Paracidovorax citrulli (strain AAC00-1) (Acidovorax citrulli).